The chain runs to 360 residues: Phosphate acyltransferase (360 aa).

Belongs to the PlsX family. As to quaternary structure, homodimer. Probably interacts with PlsY.

The protein localises to the cytoplasm. It carries out the reaction a fatty acyl-[ACP] + phosphate = an acyl phosphate + holo-[ACP]. It participates in lipid metabolism; phospholipid metabolism. Functionally, catalyzes the reversible formation of acyl-phosphate (acyl-PO(4)) from acyl-[acyl-carrier-protein] (acyl-ACP). This enzyme utilizes acyl-ACP as fatty acyl donor, but not acyl-CoA. This Thermobifida fusca (strain YX) protein is Phosphate acyltransferase.